The chain runs to 358 residues: Sulfate/thiosulfate import ATP-binding protein CysA (358 aa).

The 235-residue stretch at 3 to 237 (IKIENLEKHF…PQTPFVTQFV (235 aa)) folds into the ABC transporter domain. Residue 35–42 (GPSGCGKT) participates in ATP binding.

The protein belongs to the ABC transporter superfamily. Sulfate/tungstate importer (TC 3.A.1.6) family. The complex is composed of two ATP-binding proteins (CysA), two transmembrane proteins (CysT and CysW) and a solute-binding protein (CysP).

It localises to the cell inner membrane. The catalysed reaction is sulfate(out) + ATP + H2O = sulfate(in) + ADP + phosphate + H(+). It catalyses the reaction thiosulfate(out) + ATP + H2O = thiosulfate(in) + ADP + phosphate + H(+). Its function is as follows. Part of the ABC transporter complex CysAWTP involved in sulfate/thiosulfate import. Responsible for energy coupling to the transport system. This is Sulfate/thiosulfate import ATP-binding protein CysA from Mannheimia succiniciproducens (strain KCTC 0769BP / MBEL55E).